The chain runs to 140 residues: Large ribosomal subunit protein bL17 (140 aa).

Belongs to the bacterial ribosomal protein bL17 family. As to quaternary structure, part of the 50S ribosomal subunit. Contacts protein L32.

This Rhizobium rhizogenes (strain K84 / ATCC BAA-868) (Agrobacterium radiobacter) protein is Large ribosomal subunit protein bL17.